The primary structure comprises 159 residues: MSFRIGHGYDVHKFTSAKQNIIIGGVEIAYHLGLEAHSDGDVLIHALCDAILGALGLGDIGKHFPDTDNQFKNIDSKFFLAEIKKMLDEKQYSINNIDCTIIAQAPKMLPHIEKMRACLANILEIQISQINIKATTTERLGFIGREEGIATHVVCLLYR.

Residues aspartate 10 and histidine 12 each contribute to the a divalent metal cation site. 4-CDP-2-C-methyl-D-erythritol 2-phosphate is bound by residues 10-12 (DVH) and 37-38 (HS). Histidine 45 is an a divalent metal cation binding site. 4-CDP-2-C-methyl-D-erythritol 2-phosphate-binding positions include 59-61 (DIG), 64-68 (FPDTD), 103-109 (AQAPKML), 135-138 (TTTE), phenylalanine 142, and arginine 145.

The protein belongs to the IspF family. As to quaternary structure, homotrimer. A divalent metal cation serves as cofactor.

The catalysed reaction is 4-CDP-2-C-methyl-D-erythritol 2-phosphate = 2-C-methyl-D-erythritol 2,4-cyclic diphosphate + CMP. Its pathway is isoprenoid biosynthesis; isopentenyl diphosphate biosynthesis via DXP pathway; isopentenyl diphosphate from 1-deoxy-D-xylulose 5-phosphate: step 4/6. In terms of biological role, involved in the biosynthesis of isopentenyl diphosphate (IPP) and dimethylallyl diphosphate (DMAPP), two major building blocks of isoprenoid compounds. Catalyzes the conversion of 4-diphosphocytidyl-2-C-methyl-D-erythritol 2-phosphate (CDP-ME2P) to 2-C-methyl-D-erythritol 2,4-cyclodiphosphate (ME-CPP) with a corresponding release of cytidine 5-monophosphate (CMP). The sequence is that of 2-C-methyl-D-erythritol 2,4-cyclodiphosphate synthase from Francisella tularensis subsp. novicida (strain U112).